Consider the following 73-residue polypeptide: UPF0435 protein OB1527 (73 aa).

Belongs to the UPF0435 family.

The chain is UPF0435 protein OB1527 from Oceanobacillus iheyensis (strain DSM 14371 / CIP 107618 / JCM 11309 / KCTC 3954 / HTE831).